Consider the following 550-residue polypeptide: Glucose-6-phosphate isomerase (550 aa).

D-glucose 6-phosphate contacts are provided by residues 164-165, 215-220, Gln359, Glu363, and His394; these read GS and SKTFTT. The active-site Proton donor is Glu363. His394 is a catalytic residue. The residue at position 455 (Thr455) is a Phosphothreonine. Lys516 contacts D-glucose 6-phosphate. Lys516 is a catalytic residue.

Belongs to the GPI family. Homodimer.

The protein localises to the cytoplasm. It is found in the cytosol. The catalysed reaction is alpha-D-glucose 6-phosphate = beta-D-fructose 6-phosphate. It participates in carbohydrate degradation; glycolysis; D-glyceraldehyde 3-phosphate and glycerone phosphate from D-glucose: step 2/4. In terms of biological role, in the cytoplasm, catalyzes the conversion of glucose-6-phosphate to fructose-6-phosphate, the second step in glycolysis, and the reverse reaction during gluconeogenesis. This is Glucose-6-phosphate isomerase (pgi1) from Schizosaccharomyces pombe (strain 972 / ATCC 24843) (Fission yeast).